A 20-amino-acid polypeptide reads, in one-letter code: Hemoglobinase-like protein 1 (20 aa).

Belongs to the peptidase C13 family.

The catalysed reaction is Hydrolysis of proteins and small molecule substrates at -Asn-|-Xaa- bonds.. The polypeptide is Hemoglobinase-like protein 1 (Fasciola hepatica (Liver fluke)).